A 263-amino-acid polypeptide reads, in one-letter code: Acyl-[acyl-carrier-protein]--UDP-N-acetylglucosamine O-acyltransferase (263 aa).

Belongs to the transferase hexapeptide repeat family. LpxA subfamily. Homotrimer.

The protein resides in the cytoplasm. The catalysed reaction is a (3R)-hydroxyacyl-[ACP] + UDP-N-acetyl-alpha-D-glucosamine = a UDP-3-O-[(3R)-3-hydroxyacyl]-N-acetyl-alpha-D-glucosamine + holo-[ACP]. It functions in the pathway glycolipid biosynthesis; lipid IV(A) biosynthesis; lipid IV(A) from (3R)-3-hydroxytetradecanoyl-[acyl-carrier-protein] and UDP-N-acetyl-alpha-D-glucosamine: step 1/6. Involved in the biosynthesis of lipid A, a phosphorylated glycolipid that anchors the lipopolysaccharide to the outer membrane of the cell. This is Acyl-[acyl-carrier-protein]--UDP-N-acetylglucosamine O-acyltransferase from Xanthomonas euvesicatoria pv. vesicatoria (strain 85-10) (Xanthomonas campestris pv. vesicatoria).